Reading from the N-terminus, the 314-residue chain is Protoheme IX farnesyltransferase (314 aa).

8 consecutive transmembrane segments (helical) span residues 36-56 (IGIV…AISF), 65-85 (WGTF…GCIV), 114-134 (SVLT…MFTS), 135-155 (WYAT…YTIW), 179-199 (WAAI…IMFI), 237-257 (IIVY…TMGI), 259-279 (FAVI…TGLF), and 290-310 (IFIF…IVKL).

Belongs to the UbiA prenyltransferase family. Protoheme IX farnesyltransferase subfamily. As to quaternary structure, interacts with CtaA.

It localises to the cell membrane. The enzyme catalyses heme b + (2E,6E)-farnesyl diphosphate + H2O = Fe(II)-heme o + diphosphate. Its pathway is porphyrin-containing compound metabolism; heme O biosynthesis; heme O from protoheme: step 1/1. Its function is as follows. Converts heme B (protoheme IX) to heme O by substitution of the vinyl group on carbon 2 of heme B porphyrin ring with a hydroxyethyl farnesyl side group. The polypeptide is Protoheme IX farnesyltransferase (Oceanobacillus iheyensis (strain DSM 14371 / CIP 107618 / JCM 11309 / KCTC 3954 / HTE831)).